Here is a 369-residue protein sequence, read N- to C-terminus: Chanoclavine-I aldehyde reductase fgaOx3 (369 aa).

Residues 23–25, Ala-58, Gln-100, and His-169 contribute to the FMN site; that span reads PMT. Positions 169 and 172 each coordinate substrate. Tyr-174 serves as the catalytic Proton donor. FMN is bound by residues Gly-292, 316–317, and Arg-317; that span reads GR. Tyr-344 contributes to the substrate binding site.

It belongs to the NADH:flavin oxidoreductase/NADH oxidase family. As to quaternary structure, monomer. The cofactor is FMN.

It carries out the reaction dihydrochanoclavine-I aldehyde + NADP(+) = chanoclavine-I aldehyde + NADPH + H(+). It participates in alkaloid biosynthesis; ergot alkaloid biosynthesis. Its function is as follows. Chanoclavine-I aldehyde reductase; part of the gene cluster that mediates the biosynthesis of isofumigaclavines, fungal ergot alkaloids. The tryptophan dimethylallyltransferase ifgA catalyzes the first step of ergot alkaloid biosynthesis by condensing dimethylallyl diphosphate (DMAP) and tryptophan to form 4-dimethylallyl-L-tryptophan. The second step is catalyzed by the methyltransferase ifgB that methylates 4-dimethylallyl-L-tryptophan in the presence of S-adenosyl-L-methionine, resulting in the formation of N-methyl-dimethylallyl-L-tryptophan. The catalase ifgD and the FAD-dependent oxidoreductase ifgC then transform N-methyl-dimethylallyl-L-tryptophan to chanoclavine-I which is further oxidized by ifgE in the presence of NAD(+), resulting in the formation of chanoclavine-I aldehyde. The chanoclavine-I aldehyde reductases ifgG and/or fgaOx3 reduce chanoclavine-I aldehyde to dihydrochanoclavine-I aldehyde that spontaneously dehydrates to form 6,8-dimethyl-6,7-didehydroergoline. The festuclavine dehydrogenases ifgF1 and/or ifgF2 then catalyze the reduction of 6,8-dimethyl-6,7-didehydroergoline to form festuclavine. Hydrolysis of festuclavine by a yet undetermined cytochrome P450 monooxygenase (called ifgH) then leads to the formation of isofumigaclavine B which is in turn acetylated by ifgI to isofumigaclavine A. Penicillium roqueforti has interestingly at least two sets of genes for the consumption of chanoclavine-I aldehyde on three different loci, the OYEs ifgG/fgaOx3 and the festuclavine synthase homologs ifgF1/ifgF2. The reason for the duplication of these genes is unclear, probably to ensure the conversion of chanoclavine-I aldehyde by differential gene expression under various environmental conditions. This Penicillium roqueforti (strain FM164) protein is Chanoclavine-I aldehyde reductase fgaOx3.